We begin with the raw amino-acid sequence, 215 residues long: Eukaryotic translation initiation factor 4E-1A (215 aa).

Residues 1 to 14 (MATAEPETSTNPSN) show a composition bias toward low complexity. Residues 1–23 (MATAEPETSTNPSNSEEKNEENE) are disordered. Residues 54-55 (WQ), 100-101 (WE), 155-160 (RTKGDK), and 203-205 (TKS) each bind mRNA.

Belongs to the eukaryotic initiation factor 4E family. In terms of assembly, interacts with eif4ebp3l. In terms of tissue distribution, expressed in all tissues examined, including gill, fin, heart, intestine, muscle, ovary and testis.

It localises to the cytoplasm. Its subcellular location is the nucleus. Functionally, recognizes and binds the 7-methylguanosine (m7G)-containing mRNA cap during an early step in the initiation of protein synthesis and facilitates ribosome binding by inducing the unwinding of the mRNAs secondary structures. Also promotes export of a subset of mRNAs from the nucleus to the cytoplasm. The sequence is that of Eukaryotic translation initiation factor 4E-1A from Danio rerio (Zebrafish).